A 327-amino-acid polypeptide reads, in one-letter code: Alkanal monooxygenase beta chain (327 aa).

This sequence belongs to the bacterial luciferase oxidoreductase family. As to quaternary structure, heterodimer of an alpha and a beta chain.

It carries out the reaction a long-chain fatty aldehyde + FMNH2 + O2 = a long-chain fatty acid + hnu + FMN + H2O + 2 H(+). Its function is as follows. Light-emitting reaction in luminous bacteria. The specific role of the beta subunit is unknown, but it is absolutely required for bioluminescence activity. In Photorhabdus luminescens (Xenorhabdus luminescens), this protein is Alkanal monooxygenase beta chain (luxB).